We begin with the raw amino-acid sequence, 251 residues long: Triosephosphate isomerase, glycosomal (251 aa).

Residues N12 and K14 each coordinate substrate. Catalysis depends on H96, which acts as the Electrophile. E168 (proton acceptor) is an active-site residue.

It belongs to the triosephosphate isomerase family. As to quaternary structure, homodimer.

Its subcellular location is the glycosome. The enzyme catalyses D-glyceraldehyde 3-phosphate = dihydroxyacetone phosphate. Its pathway is carbohydrate biosynthesis; gluconeogenesis. It functions in the pathway carbohydrate degradation; glycolysis; D-glyceraldehyde 3-phosphate from glycerone phosphate: step 1/1. The sequence is that of Triosephosphate isomerase, glycosomal from Trypanosoma cruzi.